We begin with the raw amino-acid sequence, 377 residues long: Succinyl-diaminopimelate desuccinylase (377 aa).

Residue H67 coordinates Zn(2+). D69 is a catalytic residue. A Zn(2+)-binding site is contributed by D100. E134 functions as the Proton acceptor in the catalytic mechanism. Residues E135, E163, and H349 each contribute to the Zn(2+) site.

This sequence belongs to the peptidase M20A family. DapE subfamily. As to quaternary structure, homodimer. It depends on Zn(2+) as a cofactor. Co(2+) is required as a cofactor.

It carries out the reaction N-succinyl-(2S,6S)-2,6-diaminopimelate + H2O = (2S,6S)-2,6-diaminopimelate + succinate. It functions in the pathway amino-acid biosynthesis; L-lysine biosynthesis via DAP pathway; LL-2,6-diaminopimelate from (S)-tetrahydrodipicolinate (succinylase route): step 3/3. Its function is as follows. Catalyzes the hydrolysis of N-succinyl-L,L-diaminopimelic acid (SDAP), forming succinate and LL-2,6-diaminopimelate (DAP), an intermediate involved in the bacterial biosynthesis of lysine and meso-diaminopimelic acid, an essential component of bacterial cell walls. The sequence is that of Succinyl-diaminopimelate desuccinylase from Glaesserella parasuis serovar 5 (strain SH0165) (Haemophilus parasuis).